Reading from the N-terminus, the 351-residue chain is Heat-inducible transcription repressor HrcA (351 aa).

Belongs to the HrcA family.

Its function is as follows. Negative regulator of class I heat shock genes (grpE-dnaK-dnaJ and groELS operons). Prevents heat-shock induction of these operons. The sequence is that of Heat-inducible transcription repressor HrcA from Mycoplasma pneumoniae (strain ATCC 29342 / M129 / Subtype 1) (Mycoplasmoides pneumoniae).